We begin with the raw amino-acid sequence, 457 residues long: TnpB-like protein ORF457 (457 aa).

Residues 1–22 (MPPSSGQLLGDEEREPTSTPAI) are disordered.

In the N-terminal section; belongs to the transposase 2 family. The protein in the C-terminal section; belongs to the transposase 35 family.

This is TnpB-like protein ORF457 from Acidianus two-tailed virus (ATV).